The primary structure comprises 331 residues: MQRWINNIWYGSNPIKWLLVPLSGLFWLISSLRRKKFAGSPSASEALGVPVIIVGNITVGGSGKTPMVIYLIELLRRQGYRPGVISRGYGVKIDGVKLVEAQASAVDVGDEPAMIVARTQVPMAVGPDRLAAVSLLQRHYDIDVIISDDGLQHYKLTRDIELVIIDGARRFGNGYLLPAGPLREGLWRLKTIDWLINNGGKAQDNEVLMQLEPKPLLKVKSSQPGLESLDKALPVVAMAGIGNPARFFDSLSGQGYQLKHTLAFDDHQAFDAQALIALAGDLPLIMTEKDAIKCRDFAQDNWWYLPVNARLNADFDKALLARLAPLVQIKP.

58–65 (TVGGSGKT) provides a ligand contact to ATP.

This sequence belongs to the LpxK family.

The enzyme catalyses a lipid A disaccharide + ATP = a lipid IVA + ADP + H(+). Its pathway is glycolipid biosynthesis; lipid IV(A) biosynthesis; lipid IV(A) from (3R)-3-hydroxytetradecanoyl-[acyl-carrier-protein] and UDP-N-acetyl-alpha-D-glucosamine: step 6/6. Functionally, transfers the gamma-phosphate of ATP to the 4'-position of a tetraacyldisaccharide 1-phosphate intermediate (termed DS-1-P) to form tetraacyldisaccharide 1,4'-bis-phosphate (lipid IVA). In Shewanella denitrificans (strain OS217 / ATCC BAA-1090 / DSM 15013), this protein is Tetraacyldisaccharide 4'-kinase.